Here is a 99-residue protein sequence, read N- to C-terminus: Small ribosomal subunit protein bS20 (99 aa).

The protein belongs to the bacterial ribosomal protein bS20 family.

Functionally, binds directly to 16S ribosomal RNA. The polypeptide is Small ribosomal subunit protein bS20 (Caldicellulosiruptor saccharolyticus (strain ATCC 43494 / DSM 8903 / Tp8T 6331)).